Consider the following 222-residue polypeptide: Ribosomal RNA small subunit methyltransferase I (222 aa).

This sequence belongs to the methyltransferase superfamily. RsmI family.

Its subcellular location is the cytoplasm. It catalyses the reaction cytidine(1402) in 16S rRNA + S-adenosyl-L-methionine = 2'-O-methylcytidine(1402) in 16S rRNA + S-adenosyl-L-homocysteine + H(+). Catalyzes the 2'-O-methylation of the ribose of cytidine 1402 (C1402) in 16S rRNA. This chain is Ribosomal RNA small subunit methyltransferase I, found in Mycoplasmopsis pulmonis (strain UAB CTIP) (Mycoplasma pulmonis).